The following is a 460-amino-acid chain: Arginine decarboxylase (460 aa).

K226 carries the N6-(pyridoxal phosphate)lysine modification.

The protein belongs to the Orn/Lys/Arg decarboxylase class-I family. The cofactor is pyridoxal 5'-phosphate.

Its subcellular location is the cytoplasm. It carries out the reaction L-arginine + H(+) = agmatine + CO2. It participates in amine and polyamine biosynthesis; agmatine biosynthesis; agmatine from L-arginine: step 1/1. Catalyzes the formation of agmatine from arginine. This chain is Arginine decarboxylase (speA), found in Bacillus cereus (strain ATCC 14579 / DSM 31 / CCUG 7414 / JCM 2152 / NBRC 15305 / NCIMB 9373 / NCTC 2599 / NRRL B-3711).